The primary structure comprises 1124 residues: Zinc finger E-box-binding homeobox 1 (1124 aa).

Disordered regions lie at residues 1 to 124 (MADG…NHDP) and 142 to 163 (APEEDQRQGTPEASGHDENGTP). A compositionally biased stretch (low complexity) spans 18–30 (NNVTNYNTVVETN). Phosphoserine occurs at positions 31 and 33. The segment covering 44-62 (EESVTDAADCEGVPEDDLP) has biased composition (acidic residues). Residues 72–91 (SSEREGNAKNCWEDDRKEGQ) are compositionally biased toward basic and acidic residues. A C2H2-type 1 zinc finger spans residues 170–193 (LTCPYCDRGYKRFTSLKEHIKYRH). Glycyl lysine isopeptide (Lys-Gly) (interchain with G-Cter in SUMO2) cross-links involve residues lysine 186 and lysine 195. 2 C2H2-type zinc fingers span residues 200–222 (FSCSLCSYTFAYRTQLERHMTSH) and 240–262 (FKCTECGKAFKYKHHLKEHLRIH). A C2H2-type 4; atypical zinc finger spans residues 268-292 (YECPNCKKRFSHSGSYSSHISSKKC). The disordered stretch occupies residues 304 to 327 (TGLKTSQCSSPSLSASPGSPTRPQ). Lysine 307 is covalently cross-linked (Glycyl lysine isopeptide (Lys-Gly) (interchain with G-Cter in SUMO2)). Residues 309 to 322 (SQCSSPSLSASPGS) are compositionally biased toward low complexity. Serine 313 and serine 322 each carry phosphoserine. Glycyl lysine isopeptide (Lys-Gly) (interchain with G-Cter in SUMO2) cross-links involve residues lysine 331 and lysine 335. Lysine 347 participates in a covalent cross-link: Glycyl lysine isopeptide (Lys-Gly) (interchain with G-Cter in SUMO); alternate. Lysine 347 participates in a covalent cross-link: Glycyl lysine isopeptide (Lys-Gly) (interchain with G-Cter in SUMO2); alternate. Glycyl lysine isopeptide (Lys-Gly) (interchain with G-Cter in SUMO2) cross-links involve residues lysine 439, lysine 493, lysine 504, lysine 515, lysine 548, and lysine 553. 2 disordered regions span residues 551 to 586 (DLKQPTQPPPLPAAEAEKPESSVSSATGDGNLSPSQ) and 636 to 714 (QISV…SSSR). The homeobox; atypical DNA-binding region spans 581 to 640 (NLSPSQPPLKNLLSLLKAYYALNAQPSAEELSKIADSVNLPLDVVKKWFEKMQAGQISVQ). Phosphoserine occurs at positions 642, 679, 686, 693, and 700. Residues 656 to 687 (AKNNDQPQSANANEPQDSTVNLQSPLKMTNSP) are compositionally biased toward polar residues. The segment covering 692–714 (GSTTNGSRSSTPSPSPLNLSSSR) has biased composition (low complexity). Threonine 702 carries the post-translational modification Phosphothreonine. The residue at position 704 (serine 704) is a Phosphoserine. Lysine 774 participates in a covalent cross-link: Glycyl lysine isopeptide (Lys-Gly) (interchain with G-Cter in SUMO); alternate. Lysine 774 is covalently cross-linked (Glycyl lysine isopeptide (Lys-Gly) (interchain with G-Cter in SUMO2); alternate). The disordered stretch occupies residues 856-898 (PPLKVIQPNGNQDERQDTSSEGVSNVEDQNDSDSTPPKKKMRK). Residues 874–890 (SSEGVSNVEDQNDSDST) are compositionally biased toward polar residues. 2 consecutive C2H2-type zinc fingers follow at residues 904–926 (YACDLCDKIFQKSSSLLRHKYEH) and 932–954 (HECGICKKAFKHKHHLIEHMRLH). The segment at 960–981 (YQCDKCGKRFSHSGSYSQHMNH) adopts a C2H2-type 7; atypical zinc-finger fold. The segment at 989–1124 (EAEERDSTEQ…QVSEEKTNEA (136 aa)) is disordered. Acidic residues-rich tracts occupy residues 1031–1052 (EEDEDSEKEEEEEDKEMEELQE) and 1062–1084 (DEEEEEEEEEVEEEEVEEAENEG). The span at 1085–1099 (EEAKTEGLMKDDRAE) shows a compositional bias: basic and acidic residues. Over residues 1100-1115 (SQASSLGQKVGESSEQ) the composition is skewed to polar residues.

The protein belongs to the delta-EF1/ZFH-1 C2H2-type zinc-finger family. Interacts (via N-terminus) with SMARCA4/BRG1. Post-translationally, ubiquitinated, leading to degradation in a proteasome-dependent manner. Deubiquitinated by USP51, leading to stabilization. As to expression, colocalizes with SMARCA4/BRG1 in E-cadherin-negative cells from established lines, and stroma of normal colon as well as in de-differentiated epithelial cells at the invasion front of colorectal carcinomas (at protein level). Expressed in heart and skeletal muscle, but not in liver, spleen, or pancreas.

It is found in the nucleus. Functionally, acts as a transcriptional repressor. Inhibits interleukin-2 (IL-2) gene expression. Enhances or represses the promoter activity of the ATP1A1 gene depending on the quantity of cDNA and on the cell type. Represses E-cadherin promoter and induces an epithelial-mesenchymal transition (EMT) by recruiting SMARCA4/BRG1. Represses BCL6 transcription in the presence of the corepressor CTBP1. Positively regulates neuronal differentiation. Represses RCOR1 transcription activation during neurogenesis. Represses transcription by binding to the E box (5'-CANNTG-3'). In the absence of TGFB1, acts as a repressor of COL1A2 transcription via binding to the E-box in the upstream enhancer region. This chain is Zinc finger E-box-binding homeobox 1, found in Homo sapiens (Human).